The following is a 397-amino-acid chain: Phosphoglycerate kinase (397 aa).

Substrate is bound by residues D21 to N23, R36, H59 to R62, R119, and R156. Residues K207, G295, E326, and G353–S356 each bind ATP.

The protein belongs to the phosphoglycerate kinase family. In terms of assembly, monomer.

It is found in the cytoplasm. It catalyses the reaction (2R)-3-phosphoglycerate + ATP = (2R)-3-phospho-glyceroyl phosphate + ADP. Its pathway is carbohydrate degradation; glycolysis; pyruvate from D-glyceraldehyde 3-phosphate: step 2/5. This Enterococcus faecalis (strain ATCC 700802 / V583) protein is Phosphoglycerate kinase.